Reading from the N-terminus, the 362-residue chain is D-alanine--D-alanine ligase (362 aa).

Positions 153-357 (KKIAREAGIP…YADLLTTLVS (205 aa)) constitute an ATP-grasp domain. 180–235 (RELLGLPVFVKPARGGSSIGISKVDSWRDLPAAIEEAASHDPKVIIEAMITGPEVE) lines the ATP pocket. Positions 312, 324, and 326 each coordinate Mg(2+).

The protein belongs to the D-alanine--D-alanine ligase family. It depends on Mg(2+) as a cofactor. Requires Mn(2+) as cofactor.

It localises to the cytoplasm. The catalysed reaction is 2 D-alanine + ATP = D-alanyl-D-alanine + ADP + phosphate + H(+). The protein operates within cell wall biogenesis; peptidoglycan biosynthesis. Its function is as follows. Cell wall formation. This is D-alanine--D-alanine ligase from Corynebacterium urealyticum (strain ATCC 43042 / DSM 7109).